Here is a 63-residue protein sequence, read N- to C-terminus: Metallothionein-2 (63 aa).

Belongs to the metallothionein superfamily. Type 6 family.

This protein binds cations of several transition elements. This is Metallothionein-2 (mtl-2) from Caenorhabditis elegans.